We begin with the raw amino-acid sequence, 299 residues long: Acetylglutamate kinase (299 aa).

Substrate contacts are provided by residues 64 to 65 (GG), R86, and N197.

It belongs to the acetylglutamate kinase family. ArgB subfamily.

The protein localises to the cytoplasm. The catalysed reaction is N-acetyl-L-glutamate + ATP = N-acetyl-L-glutamyl 5-phosphate + ADP. The protein operates within amino-acid biosynthesis; L-arginine biosynthesis; N(2)-acetyl-L-ornithine from L-glutamate: step 2/4. In terms of biological role, catalyzes the ATP-dependent phosphorylation of N-acetyl-L-glutamate. This is Acetylglutamate kinase from Sulfurihydrogenibium sp. (strain YO3AOP1).